A 247-amino-acid polypeptide reads, in one-letter code: Ribosomal RNA large subunit methyltransferase E (247 aa).

S-adenosyl-L-methionine is bound by residues G99, W101, D123, D139, and D162. Catalysis depends on K202, which acts as the Proton acceptor.

Belongs to the class I-like SAM-binding methyltransferase superfamily. RNA methyltransferase RlmE family.

It localises to the cytoplasm. The enzyme catalyses uridine(2552) in 23S rRNA + S-adenosyl-L-methionine = 2'-O-methyluridine(2552) in 23S rRNA + S-adenosyl-L-homocysteine + H(+). In terms of biological role, specifically methylates the uridine in position 2552 of 23S rRNA at the 2'-O position of the ribose in the fully assembled 50S ribosomal subunit. The protein is Ribosomal RNA large subunit methyltransferase E of Anaplasma phagocytophilum (strain HZ).